We begin with the raw amino-acid sequence, 453 residues long: uncharacterized protein (453 aa).

The N-terminal stretch at Met1 to Gly23 is a signal peptide. The Lumenal portion of the chain corresponds to Glu24–Thr137. A helical transmembrane segment spans residues Asn138–Pro158. Residues Lys159–Met165 are Cytoplasmic-facing. The helical transmembrane segment at Leu166–Leu186 threads the bilayer. Residues Pro187–Gly194 are Lumenal-facing. The chain crosses the membrane as a helical span at residues Gly195–Met215. The Cytoplasmic segment spans residues Asp216–Val358. Residues Ser229 to Glu238 are compositionally biased toward basic and acidic residues. Residues Ser229–Asp278 are disordered. The segment covering Thr240–Asp254 has biased composition (polar residues). A compositionally biased stretch (basic and acidic residues) spans Lys256–Asp278. A helical transmembrane segment spans residues Leu359 to Ile379. The Lumenal segment spans residues Tyr380–Lys399. A helical transmembrane segment spans residues Leu400–Leu420. Topologically, residues Leu421–Asn432 are cytoplasmic. The helical transmembrane segment at Met433 to Val453 threads the bilayer.

This sequence belongs to the ZIP transporter (TC 2.A.5) family. KE4/Catsup subfamily.

Its subcellular location is the endoplasmic reticulum membrane. This is an uncharacterized protein from Schizosaccharomyces pombe (strain 972 / ATCC 24843) (Fission yeast).